A 72-amino-acid polypeptide reads, in one-letter code: Translation initiation factor IF-1 (72 aa).

The 72-residue stretch at 1–72 (MAKDDVIEVE…TRGRITYRFK (72 aa)) folds into the S1-like domain.

Belongs to the IF-1 family. As to quaternary structure, component of the 30S ribosomal translation pre-initiation complex which assembles on the 30S ribosome in the order IF-2 and IF-3, IF-1 and N-formylmethionyl-tRNA(fMet); mRNA recruitment can occur at any time during PIC assembly.

The protein localises to the cytoplasm. In terms of biological role, one of the essential components for the initiation of protein synthesis. Stabilizes the binding of IF-2 and IF-3 on the 30S subunit to which N-formylmethionyl-tRNA(fMet) subsequently binds. Helps modulate mRNA selection, yielding the 30S pre-initiation complex (PIC). Upon addition of the 50S ribosomal subunit IF-1, IF-2 and IF-3 are released leaving the mature 70S translation initiation complex. The polypeptide is Translation initiation factor IF-1 (Streptococcus pneumoniae serotype 2 (strain D39 / NCTC 7466)).